A 428-amino-acid polypeptide reads, in one-letter code: 3-phosphoshikimate 1-carboxyvinyltransferase (428 aa).

The 3-phosphoshikimate site is built by Lys-22, Ser-23, and Arg-27. Residue Lys-22 coordinates phosphoenolpyruvate. The phosphoenolpyruvate site is built by Gly-94 and Arg-122. Positions 167, 169, 314, and 341 each coordinate 3-phosphoshikimate. Gln-169 provides a ligand contact to phosphoenolpyruvate. Residue Asp-314 is the Proton acceptor of the active site. The phosphoenolpyruvate site is built by Arg-345 and Arg-387.

Belongs to the EPSP synthase family. Monomer.

The protein localises to the cytoplasm. The catalysed reaction is 3-phosphoshikimate + phosphoenolpyruvate = 5-O-(1-carboxyvinyl)-3-phosphoshikimate + phosphate. It functions in the pathway metabolic intermediate biosynthesis; chorismate biosynthesis; chorismate from D-erythrose 4-phosphate and phosphoenolpyruvate: step 6/7. Catalyzes the transfer of the enolpyruvyl moiety of phosphoenolpyruvate (PEP) to the 5-hydroxyl of shikimate-3-phosphate (S3P) to produce enolpyruvyl shikimate-3-phosphate and inorganic phosphate. This Geotalea uraniireducens (strain Rf4) (Geobacter uraniireducens) protein is 3-phosphoshikimate 1-carboxyvinyltransferase.